Reading from the N-terminus, the 391-residue chain is Yellow-related salivary protein ASP4 (391 aa).

The N-terminal stretch at 1-18 (MKIFLCIIAVVSLQGVVA) is a signal peptide. Asparagine 29 carries an N-linked (GlcNAc...) asparagine glycan.

This sequence belongs to the major royal jelly protein family. As to expression, female salivary gland (at protein level).

It localises to the secreted. Functionally, probably modulates blood feeding of sand flies on vertebrate species by binding and sequestering different mediators involved in the host response. Binds biogenic amines. Binds serotonin and dopamine with high affinity. Binds adrenaline, octopamine and adrenaline with medium affinity. Binds histamine with low affinity. The chain is Yellow-related salivary protein ASP4 from Phlebotomus orientalis (Phlebotomine sand fly).